A 128-amino-acid chain; its full sequence is Large ribosomal subunit protein bL17 (128 aa).

The protein belongs to the bacterial ribosomal protein bL17 family. As to quaternary structure, part of the 50S ribosomal subunit. Contacts protein L32.

The polypeptide is Large ribosomal subunit protein bL17 (Streptococcus thermophilus (strain ATCC BAA-250 / LMG 18311)).